Consider the following 84-residue polypeptide: Putative membrane protein insertion efficiency factor (84 aa).

The interval 63-84 is disordered; that stretch reads WGGSGYDPVPGADPEHDRRPRG. Positions 75–84 are enriched in basic and acidic residues; sequence DPEHDRRPRG.

The protein belongs to the UPF0161 family.

The protein resides in the cell inner membrane. In terms of biological role, could be involved in insertion of integral membrane proteins into the membrane. The chain is Putative membrane protein insertion efficiency factor from Cereibacter sphaeroides (strain ATCC 17025 / ATH 2.4.3) (Rhodobacter sphaeroides).